A 212-amino-acid chain; its full sequence is MKPPISIQASEFDSSDEEPADDEQTPIQISWLPLSRVNCSQFLGLCALPGCKFKDVRRNIQKDTEELKSSGIQDVFVFCTRGELSKYRVPNLLDLYQQYGIVTHHHPIPDGGTPDIGSCWEIMEELATCLKNNRKTLIHCYGGLGRSCLVAACLLLYLSDSISPQQAIDSLRDVRGSGAIQTIKQYNYLHEFRDKLAAYLSSRDSLSRSVSR.

The segment at Met1–Gln24 is disordered. The segment at Met1–Leu34 is interaction with CDK2. Residues Asp13 to Gln24 show a composition bias toward acidic residues. One can recognise a Tyrosine-protein phosphatase domain in the interval Leu32–Ser201. Cys140 (phosphocysteine intermediate) is an active-site residue.

The protein belongs to the protein-tyrosine phosphatase family. In terms of assembly, interacts with cyclin-dependent kinases such as CDK1, CDK2 and CDK3. Does not interact with CDK4. Interacts (via C-terminus) with phosphorylated CDK2 (via C-terminal helix). Interacts with MS4A3 (via C-terminus); the interaction enhances CDKN3 enzymatic activity.

It is found in the cytoplasm. It localises to the perinuclear region. It catalyses the reaction O-phospho-L-tyrosyl-[protein] + H2O = L-tyrosyl-[protein] + phosphate. The enzyme catalyses O-phospho-L-seryl-[protein] + H2O = L-seryl-[protein] + phosphate. The catalysed reaction is O-phospho-L-threonyl-[protein] + H2O = L-threonyl-[protein] + phosphate. Its function is as follows. May play a role in cell cycle regulation. Dual specificity phosphatase active toward substrates containing either phosphotyrosine or phosphoserine residues. Dephosphorylates CDK2 at 'Thr-160' in a cyclin-dependent manner. This chain is Cyclin-dependent kinase inhibitor 3, found in Rattus norvegicus (Rat).